Consider the following 515-residue polypeptide: Integrator complex subunit 14 (515 aa).

The 203-residue stretch at proline 2–leucine 204 folds into the VWFA domain. Residues serine 10, serine 12, and threonine 86 each coordinate Mg(2+). Lysine 418 carries the N6-acetyllysine modification.

The protein belongs to the Integrator subunit 14 family. As to quaternary structure, component of the Integrator complex, composed of core subunits INTS1, INTS2, INTS3, INTS4, INTS5, INTS6, INTS7, INTS8, INTS9/RC74, INTS10, INTS11/CPSF3L, INTS12, INTS13, INTS14 and INTS15. The core complex associates with protein phosphatase 2A subunits PPP2CA and PPP2R1A, to form the Integrator-PP2A (INTAC) complex. INTS14 is part of the tail subcomplex, composed of INTS10, INTS13, INTS14 and INTS15.

Its subcellular location is the nucleus. Component of the integrator complex, a multiprotein complex that terminates RNA polymerase II (Pol II) transcription in the promoter-proximal region of genes. The integrator complex provides a quality checkpoint during transcription elongation by driving premature transcription termination of transcripts that are unfavorably configured for transcriptional elongation: the complex terminates transcription by (1) catalyzing dephosphorylation of the C-terminal domain (CTD) of Pol II subunit POLR2A/RPB1 and SUPT5H/SPT5, (2) degrading the exiting nascent RNA transcript via endonuclease activity and (3) promoting the release of Pol II from bound DNA. The integrator complex is also involved in terminating the synthesis of non-coding Pol II transcripts, such as enhancer RNAs (eRNAs), small nuclear RNAs (snRNAs), telomerase RNAs and long non-coding RNAs (lncRNAs). Within the integrator complex, INTS14 is part of the integrator tail module that acts as a platform for the recruitment of transcription factors at promoters. This is Integrator complex subunit 14 from Rattus norvegicus (Rat).